The primary structure comprises 450 residues: Tubulin beta chain (450 aa).

The GTP site is built by Glu-69, Ser-138, Gly-142, Thr-143, Gly-144, Asn-204, and Asn-226. Residue Glu-69 coordinates Mg(2+). The disordered stretch occupies residues 427–450; sequence DATIDQEFEDEEEVEEQNDDSDEQ. Positions 430 to 450 are enriched in acidic residues; sequence IDQEFEDEEEVEEQNDDSDEQ.

Belongs to the tubulin family. As to quaternary structure, dimer of alpha and beta chains. A typical microtubule is a hollow water-filled tube with an outer diameter of 25 nm and an inner diameter of 15 nM. Alpha-beta heterodimers associate head-to-tail to form protofilaments running lengthwise along the microtubule wall with the beta-tubulin subunit facing the microtubule plus end conferring a structural polarity. Microtubules usually have 13 protofilaments but different protofilament numbers can be found in some organisms and specialized cells. It depends on Mg(2+) as a cofactor.

The protein resides in the cytoplasm. It localises to the cytoskeleton. In terms of biological role, tubulin is the major constituent of microtubules, a cylinder consisting of laterally associated linear protofilaments composed of alpha- and beta-tubulin heterodimers. Microtubules grow by the addition of GTP-tubulin dimers to the microtubule end, where a stabilizing cap forms. Below the cap, tubulin dimers are in GDP-bound state, owing to GTPase activity of alpha-tubulin. The sequence is that of Tubulin beta chain from Bombyx mori (Silk moth).